Reading from the N-terminus, the 304-residue chain is Acetyl-coenzyme A carboxylase carboxyl transferase subunit beta (304 aa).

Residues 52–304 enclose the CoA carboxyltransferase N-terminal domain; the sequence is EVTKCPSCGV…TIFKVLNDII (253 aa). The Zn(2+) site is built by cysteine 56, cysteine 59, cysteine 75, and cysteine 78. Residues 56 to 78 form a C4-type zinc finger; that stretch reads CPSCGVLSHKSEIRANMKMCSNC.

Belongs to the AccD/PCCB family. Acetyl-CoA carboxylase is a heterohexamer composed of biotin carboxyl carrier protein (AccB), biotin carboxylase (AccC) and two subunits each of ACCase subunit alpha (AccA) and ACCase subunit beta (AccD). Requires Zn(2+) as cofactor.

It localises to the cytoplasm. The enzyme catalyses N(6)-carboxybiotinyl-L-lysyl-[protein] + acetyl-CoA = N(6)-biotinyl-L-lysyl-[protein] + malonyl-CoA. It participates in lipid metabolism; malonyl-CoA biosynthesis; malonyl-CoA from acetyl-CoA: step 1/1. Its function is as follows. Component of the acetyl coenzyme A carboxylase (ACC) complex. Biotin carboxylase (BC) catalyzes the carboxylation of biotin on its carrier protein (BCCP) and then the CO(2) group is transferred by the transcarboxylase to acetyl-CoA to form malonyl-CoA. The protein is Acetyl-coenzyme A carboxylase carboxyl transferase subunit beta of Fusobacterium nucleatum subsp. nucleatum (strain ATCC 25586 / DSM 15643 / BCRC 10681 / CIP 101130 / JCM 8532 / KCTC 2640 / LMG 13131 / VPI 4355).